Consider the following 515-residue polypeptide: Protein aaim-1 (515 aa).

The N-terminal stretch at 1–16 is a signal peptide; sequence MRLLFFFSILYTASLC. N-linked (GlcNAc...) asparagine glycans are attached at residues N46 and N127. Residues 248 to 267 are disordered; the sequence is RRTDPNSKFKPRPTTSQSNG. The N-linked (GlcNAc...) asparagine glycan is linked to N447.

Expressed in the terminal bulb of the pharynx and the posterior of the intestine (at protein level). Expressed by intestinal cells and secreted into the intestinal lumen (at protein level).

The protein resides in the secreted. Its function is as follows. Plays a role in promoting resistance to bacterial pathogens such as P.aeruginosa by inhibiting bacterial intestinal colonization. Functionally, (Microbial infection) Promotes infection by microsporidian pathogens such as N.parisii in the early larval stages of development. Involved in ensuring the proper orientation and location of the spore proteins of N.parisii during intestinal cell invasion. This is Protein aaim-1 from Caenorhabditis elegans.